Here is a 255-residue protein sequence, read N- to C-terminus: 4-hydroxy-tetrahydrodipicolinate reductase (255 aa).

Residues 9–14 (GFKGKM), D35, 89–91 (GTT), and 115–118 (APNF) contribute to the NAD(+) site. H145 acts as the Proton donor/acceptor in catalysis. H146 provides a ligand contact to (S)-2,3,4,5-tetrahydrodipicolinate. Residue K149 is the Proton donor of the active site. 155–156 (GT) lines the (S)-2,3,4,5-tetrahydrodipicolinate pocket.

Belongs to the DapB family.

The protein localises to the cytoplasm. It catalyses the reaction (S)-2,3,4,5-tetrahydrodipicolinate + NAD(+) + H2O = (2S,4S)-4-hydroxy-2,3,4,5-tetrahydrodipicolinate + NADH + H(+). The enzyme catalyses (S)-2,3,4,5-tetrahydrodipicolinate + NADP(+) + H2O = (2S,4S)-4-hydroxy-2,3,4,5-tetrahydrodipicolinate + NADPH + H(+). It functions in the pathway amino-acid biosynthesis; L-lysine biosynthesis via DAP pathway; (S)-tetrahydrodipicolinate from L-aspartate: step 4/4. Its function is as follows. Catalyzes the conversion of 4-hydroxy-tetrahydrodipicolinate (HTPA) to tetrahydrodipicolinate. The polypeptide is 4-hydroxy-tetrahydrodipicolinate reductase (Streptococcus pneumoniae serotype 19F (strain G54)).